The chain runs to 181 residues: Ribonuclease HII (181 aa).

The RNase H type-2 domain maps to 1–181; that stretch reads MICGIDEVGR…NLHRRSFKFI (181 aa). 3 residues coordinate a divalent metal cation: aspartate 6, glutamate 7, and aspartate 98.

The protein belongs to the RNase HII family. Mn(2+) is required as a cofactor. It depends on Mg(2+) as a cofactor.

It is found in the cytoplasm. It catalyses the reaction Endonucleolytic cleavage to 5'-phosphomonoester.. Endonuclease that specifically degrades the RNA of RNA-DNA hybrids. This chain is Ribonuclease HII, found in Borrelia hermsii (strain HS1 / DAH).